A 150-amino-acid polypeptide reads, in one-letter code: Globin-5 (150 aa).

The Globin domain maps to Pro11–Tyr150. Heme b contacts are provided by His74 and His106.

Belongs to the globin family. In terms of assembly, monomer at high oxygen tension and high pH and dimeric at low oxygen tension and lower pH.

This Petromyzon marinus (Sea lamprey) protein is Globin-5.